A 404-amino-acid polypeptide reads, in one-letter code: Argininosuccinate synthase (404 aa).

An ATP-binding site is contributed by 9–17; the sequence is AYSGGLDTS. Position 86 (Tyr86) interacts with L-citrulline. Gly116 is an ATP binding site. Positions 118, 122, and 123 each coordinate L-aspartate. Asn122 is a binding site for L-citrulline. Arg126, Ser174, Ser183, Glu259, and Tyr271 together coordinate L-citrulline.

Belongs to the argininosuccinate synthase family. Type 1 subfamily. In terms of assembly, homotetramer.

It localises to the cytoplasm. The catalysed reaction is L-citrulline + L-aspartate + ATP = 2-(N(omega)-L-arginino)succinate + AMP + diphosphate + H(+). Its pathway is amino-acid biosynthesis; L-arginine biosynthesis; L-arginine from L-ornithine and carbamoyl phosphate: step 2/3. The protein is Argininosuccinate synthase of Listeria innocua serovar 6a (strain ATCC BAA-680 / CLIP 11262).